We begin with the raw amino-acid sequence, 480 residues long: Glutamyl-tRNA(Gln) amidotransferase subunit A (480 aa).

Catalysis depends on charge relay system residues Lys76 and Ser151. Residue Ser175 is the Acyl-ester intermediate of the active site.

The protein belongs to the amidase family. GatA subfamily. As to quaternary structure, heterotrimer of A, B and C subunits.

The catalysed reaction is L-glutamyl-tRNA(Gln) + L-glutamine + ATP + H2O = L-glutaminyl-tRNA(Gln) + L-glutamate + ADP + phosphate + H(+). In terms of biological role, allows the formation of correctly charged Gln-tRNA(Gln) through the transamidation of misacylated Glu-tRNA(Gln) in organisms which lack glutaminyl-tRNA synthetase. The reaction takes place in the presence of glutamine and ATP through an activated gamma-phospho-Glu-tRNA(Gln). The sequence is that of Glutamyl-tRNA(Gln) amidotransferase subunit A from Exiguobacterium sp. (strain ATCC BAA-1283 / AT1b).